Here is a 103-residue protein sequence, read N- to C-terminus: Enhancer of rudimentary homolog (103 aa).

Belongs to the E(R) family. Homodimer.

Its function is as follows. May have a role in the cell cycle. The protein is Enhancer of rudimentary homolog of Caenorhabditis elegans.